We begin with the raw amino-acid sequence, 280 residues long: DCN1-like protein 4 (280 aa).

A disordered region spans residues 37–71; it reads GPESHGTACCSRAMPPRKKRRPTAGDDLSAKKSRQ. A DCUN1 domain is found at 89-275; it reads FSSKRCLEWF…LLDEFVEWYK (187 aa).

As to quaternary structure, may interact (via the DCUN1 domain) with unneddylated cullins.

The protein localises to the nucleus. Functionally, contributes to the neddylation of all cullins by transferring NEDD8 from N-terminally acetylated NEDD8-conjugating E2s enzyme to different cullin C-terminal domain-RBX complexes. The protein is DCN1-like protein 4 of Danio rerio (Zebrafish).